A 367-amino-acid polypeptide reads, in one-letter code: Choline-phosphate cytidylyltransferase A (367 aa).

At Met-1 the chain carries N-acetylmethionine. Residues 1-32 (MDAQSSAKVNSRKRRKEAPGPNGATEEDGIPS) are disordered. Lys-8 bears the N6-acetyllysine mark. Ile-84, Phe-85, His-92, and Lys-122 together coordinate CTP. Lys-122 and Trp-151 together coordinate phosphocholine. The CTP site is built by His-168, Asp-169, Tyr-173, Gln-195, Arg-196, Thr-197, and Ile-200. Amphipathic stretches follow at residues 228 to 287 (KELN…EFIG) and 298 to 315 (ALKH…QAIS). At Ser-233 the chain carries Phosphoserine. The autoinhibitory (AI) stretch occupies residues 272-293 (IDLIQKWEEKSREFIGSFLEMF). The interval 313–367 (AISPKQSPSSSPTHERSPSPSFRWPFSGKTSPSSSPASLSRCRAVTCDISEDEED) is disordered. A phosphoserine mark is found at Ser-315, Ser-319, Ser-321, Ser-322, and Ser-323. Over residues 315-324 (SPKQSPSSSP) the composition is skewed to polar residues. Repeat unit 1 spans residues 319–324 (SPSSSP). The segment at 319-348 (SPSSSPTHERSPSPSFRWPFSGKTSPSSSP) is 3 X repeats. Thr-325 carries the phosphothreonine modification. Residues Ser-329, Ser-331, and Ser-333 each carry the phosphoserine modification. Residues 329-333 (SPSPS) form a 2; approximate repeat. Low complexity predominate over residues 330 to 352 (PSPSFRWPFSGKTSPSSSPASLS). Phosphothreonine is present on Thr-342. A phosphoserine mark is found at Ser-343, Ser-345, Ser-346, Ser-347, Ser-350, and Ser-352. Residues 343–348 (SPSSSP) form repeat 3. Residue Thr-358 is modified to Phosphothreonine. The residue at position 362 (Ser-362) is a Phosphoserine.

The protein belongs to the cytidylyltransferase family. In terms of assembly, homodimer. In terms of processing, the serine residues of the C-terminus are phosphorylated. The inactive soluble form is stabilized by phosphorylation, the active membrane bound form is promoted by anionic lipids or diacylglycerol, and is stabilized by dephosphorylation. Post-translationally, monoubiquitinated by the SCF(FBXL2) complex, leading to proteasomal degradation. As to expression, brain and liver (at protein level). Also found in heart, kidney, spleen, lung, skeletal muscle, ovary and testis.

It is found in the cytoplasm. The protein resides in the cytosol. The protein localises to the membrane. It localises to the endoplasmic reticulum membrane. Its subcellular location is the nucleus. It carries out the reaction phosphocholine + CTP + H(+) = CDP-choline + diphosphate. It functions in the pathway phospholipid metabolism; phosphatidylcholine biosynthesis; phosphatidylcholine from phosphocholine: step 1/2. With respect to regulation, interconverts between an inactive cytosolic form and an active membrane-bound form. Activation involves disruption of an inhibitory interaction between helices at the base of the active site and the autoinhibitory (AI) region. Its function is as follows. Catalyzes the key rate-limiting step in the CDP-choline pathway for phosphatidylcholine biosynthesis. The sequence is that of Choline-phosphate cytidylyltransferase A (Pcyt1a) from Mus musculus (Mouse).